A 222-amino-acid chain; its full sequence is Sugar fermentation stimulation protein homolog (222 aa).

The protein belongs to the SfsA family.

In Thermotoga petrophila (strain ATCC BAA-488 / DSM 13995 / JCM 10881 / RKU-1), this protein is Sugar fermentation stimulation protein homolog.